A 341-amino-acid polypeptide reads, in one-letter code: N-acetyl-gamma-glutamyl-phosphate reductase (341 aa).

The active site involves cysteine 163.

This sequence belongs to the NAGSA dehydrogenase family. Type 1 subfamily.

It is found in the cytoplasm. It carries out the reaction N-acetyl-L-glutamate 5-semialdehyde + phosphate + NADP(+) = N-acetyl-L-glutamyl 5-phosphate + NADPH + H(+). The protein operates within amino-acid biosynthesis; L-arginine biosynthesis; N(2)-acetyl-L-ornithine from L-glutamate: step 3/4. Its function is as follows. Catalyzes the NADPH-dependent reduction of N-acetyl-5-glutamyl phosphate to yield N-acetyl-L-glutamate 5-semialdehyde. The chain is N-acetyl-gamma-glutamyl-phosphate reductase from Idiomarina loihiensis (strain ATCC BAA-735 / DSM 15497 / L2-TR).